A 122-amino-acid polypeptide reads, in one-letter code: Crustacean hyperglycemic hormones 5 (122 aa).

A signal peptide spans 1 to 26 (MSLGLIASRLVAVALVVVVACSTTWA). 3 disulfide bridges follow: cysteine 55–cysteine 91, cysteine 71–cysteine 87, and cysteine 74–cysteine 100. At valine 120 the chain carries Valine amide.

It belongs to the arthropod CHH/MIH/GIH/VIH hormone family.

It localises to the secreted. Hormone found in the sinus gland of isopods and decapods which controls the blood sugar level. Has a secretagogue action over the amylase released from the midgut gland. May act as a stress hormone and may be involved in the control of molting and reproduction. This Penaeus monodon (Giant tiger prawn) protein is Crustacean hyperglycemic hormones 5 (CHH5).